Consider the following 237-residue polypeptide: Ig heavy chain Mem5 (237 aa).

2 consecutive Ig-like domains span residues 1–119 (EVKL…LTVS) and 126–218 (PSVY…KKIE). A disulfide bridge links Cys22 with Cys98. The interval 101–105 (VDYGT) is d segment. The segment at 106–120 (NYDYWGQGTTLTVSS) is JH2 segment. The cysteines at positions 147 and 202 are disulfide-linked.

It localises to the secreted. Anti-influenza H3N2 neuraminidase antibody. This is Ig heavy chain Mem5 from Mus musculus (Mouse).